The primary structure comprises 267 residues: Undecaprenyl-diphosphatase (267 aa).

Helical transmembrane passes span 1–21, 49–69, 83–103, 111–131, 190–210, 219–239, and 245–265; these read MTLFHLILVAVIQGLTEFLPV, VGTLFAVVLYFRADVAVAVAG, AFLALCLLIATVPVMVVGLAL, ALRSMAVIGWTMLIFGIVLYW, MLMSIPTILASGGLLGVEVAA, DAAIGAVFAFGAALLALTLMM, and VSFTPYVIYRVCLGTILLIIA.

Belongs to the UppP family.

The protein localises to the cell inner membrane. The enzyme catalyses di-trans,octa-cis-undecaprenyl diphosphate + H2O = di-trans,octa-cis-undecaprenyl phosphate + phosphate + H(+). In terms of biological role, catalyzes the dephosphorylation of undecaprenyl diphosphate (UPP). Confers resistance to bacitracin. The sequence is that of Undecaprenyl-diphosphatase from Dinoroseobacter shibae (strain DSM 16493 / NCIMB 14021 / DFL 12).